Consider the following 499-residue polypeptide: MSVTVSSPAGRSFHISRSPYKKISKPRVIIAAVRSGVSLAVAPILTKLQKDCATPLPVLRHVADAMAVDMRAGLAVDGGSDLKMILSYIDTLPTGNEKGLFYALDLGGTNFRVLRVQLGGKEERVIATEFEQVSIPQELMFATSEELFDFIASELGKFSQSEGGKFEMQQGRTREIGFTFSFPVKQTSVKSGILIKWTKGFAVSGTAGKDVVACLNEAMERQGLGMQVSALVNDTVATLAGARYWDNDVMVAVILGTGTNACYVERVDAIPKLPQRMSNSPETIVNTEWGAFSNGLPLTEFDREMDAESINPGEQIFEKTISGMYLGEIVRRVLVKMAKVGGLFGGGYVPEKLVTPFVLRTPDICAMQQDTSRDLEAVESVLYDIAGVKSDLSARKTVVDICDTIANRGGRLAGAGIVGILQKMEEDSKGVIFGKRTVVAMDGGLYEHYPQYREYLQEAVTELLGSEISKNVVIEHSKDGSGIGAALLAAANSKYEHDY.

The transit peptide at 1-30 (MSVTVSSPAGRSFHISRSPYKKISKPRVII) directs the protein to the chloroplast. The region spanning 39-490 (LAVAPILTKL…SGIGAALLAA (452 aa)) is the Hexokinase domain. The tract at residues 94 to 232 (TGNEKGLFYA…GLGMQVSALV (139 aa)) is hexokinase small subdomain. ADP-binding residues include glycine 108, threonine 109, and asparagine 110. Residues threonine 198, lysine 199, asparagine 233, and aspartate 234 each coordinate D-glucose. A hexokinase large subdomain region spans residues 233–479 (NDTVATLAGA…KNVVIEHSKD (247 aa)). Threonine 257 is an ADP binding site. Residues asparagine 260, glutamate 288, and glutamate 318 each coordinate D-glucose. Glycine 444 lines the ADP pocket.

It belongs to the hexokinase family. In terms of tissue distribution, expressed in vascular starch sheath, xylem parenchyma, guard cells and root tips.

The protein resides in the plastid. The protein localises to the chloroplast stroma. It carries out the reaction a D-hexose + ATP = a D-hexose 6-phosphate + ADP + H(+). The enzyme catalyses D-fructose + ATP = D-fructose 6-phosphate + ADP + H(+). It catalyses the reaction D-glucose + ATP = D-glucose 6-phosphate + ADP + H(+). Its pathway is carbohydrate metabolism; hexose metabolism. It participates in carbohydrate degradation; glycolysis; D-glyceraldehyde 3-phosphate and glycerone phosphate from D-glucose: step 1/4. In terms of biological role, fructose and glucose phosphorylating enzyme. The protein is Hexokinase-2, chloroplastic (HXK2) of Nicotiana tabacum (Common tobacco).